Reading from the N-terminus, the 157-residue chain is SsrA-binding protein (157 aa).

Residues 133–157 (HDKRNSIKEREGKREVERALKSRSR) are disordered.

Belongs to the SmpB family.

It is found in the cytoplasm. Required for rescue of stalled ribosomes mediated by trans-translation. Binds to transfer-messenger RNA (tmRNA), required for stable association of tmRNA with ribosomes. tmRNA and SmpB together mimic tRNA shape, replacing the anticodon stem-loop with SmpB. tmRNA is encoded by the ssrA gene; the 2 termini fold to resemble tRNA(Ala) and it encodes a 'tag peptide', a short internal open reading frame. During trans-translation Ala-aminoacylated tmRNA acts like a tRNA, entering the A-site of stalled ribosomes, displacing the stalled mRNA. The ribosome then switches to translate the ORF on the tmRNA; the nascent peptide is terminated with the 'tag peptide' encoded by the tmRNA and targeted for degradation. The ribosome is freed to recommence translation, which seems to be the essential function of trans-translation. The chain is SsrA-binding protein from Verminephrobacter eiseniae (strain EF01-2).